Here is a 211-residue protein sequence, read N- to C-terminus: UPF0056 membrane protein BUsg_257 (211 aa).

6 helical membrane passes run 14 to 34 (FFVS…FTTM), 54 to 74 (AFII…AFGI), 76 to 96 (INSF…SMIS), 116 to 136 (VVPL…TIVW), 144 to 164 (SDFL…WLCF), and 185 to 205 (IMGL…IKSI).

It belongs to the UPF0056 (MarC) family.

It is found in the cell membrane. The polypeptide is UPF0056 membrane protein BUsg_257 (Buchnera aphidicola subsp. Schizaphis graminum (strain Sg)).